The following is a 596-amino-acid chain: DNA mismatch repair protein MutL (596 aa).

It belongs to the DNA mismatch repair MutL/HexB family.

In terms of biological role, this protein is involved in the repair of mismatches in DNA. It is required for dam-dependent methyl-directed DNA mismatch repair. May act as a 'molecular matchmaker', a protein that promotes the formation of a stable complex between two or more DNA-binding proteins in an ATP-dependent manner without itself being part of a final effector complex. The protein is DNA mismatch repair protein MutL of Leptospira borgpetersenii serovar Hardjo-bovis (strain JB197).